The primary structure comprises 569 residues: MGFLFGLFIGIAVSFGLVVAFARYSSVRSTRRADLAKTIAAFARMTVQDSRKLLPGDFYPSWVVFSQRQKLNWLNLELEKIWPYVNEAASELIKSSVEPVLEQYTPAMLASLKFSKFTLGTVAPQFTGVSILESESGPNGITMELEMQWDGNPKIVLDVKTLLGVSLPIEVKNIGFTGVFRLIFKPLVDEFPCFGALSYSLREKKGLDFTLKVIGGELTSIPGISDAIEETIRDAIEDSITWPVRKIIPILPGDYSDLELKPVGKLDVKVVQAKDLANKDMIGKSDPYAIVFIRPLPDRTKKTKTISNSLNPIWNEHFEFIVEDVSTQHLTVRVFDDEGVGSSQLIGAAQVPLNELVPGKVKDIWLKLVKDLEIQRDTKNRGQVQLELLYCPLGKEGGLKNPFNPDYSLTILEKVLKPESEDSDATDMKKLVTSKKKDVIVRGVLSVTVVAAEDLPAVDFMGKADAFVVITLKKSETKSKTRVVPDSLNPVWNQTFDFVVEDALHDLLTLEVWDHDKFGKDKIGRVIMTLTRVMLEGEFQEWFELDGAKSGKLCVHLKWTPRLKLRDAS.

A helical membrane pass occupies residues 1 to 21; the sequence is MGFLFGLFIGIAVSFGLVVAF. The region spanning 67 to 251 is the SMP-LTD domain; that stretch reads QRQKLNWLNL…WPVRKIIPIL (185 aa). The phospholipid binding stretch occupies residues 229-531; that stretch reads EETIRDAIED…KIGRVIMTLT (303 aa). 2 C2 domains span residues 245-366 and 426-543; these read RKII…DIWL and TDMK…QEWF. Positions 459, 465, 514, 516, and 521 each coordinate Ca(2+).

Belongs to the synaptotagmin family. Ca(2+) serves as cofactor.

It localises to the membrane. May be involved in membrane trafficking. This chain is Synaptotagmin-4 (SYT4), found in Arabidopsis thaliana (Mouse-ear cress).